A 193-amino-acid polypeptide reads, in one-letter code: dCTP deaminase (193 aa).

Residues 110–115 (RSSLAR), Asp-128, 136–138 (VLE), Tyr-171, Lys-178, and Gln-182 each bind dCTP. The active-site Proton donor/acceptor is Glu-138. The disordered stretch occupies residues 171–193 (YNKRKNAKYKDQQDAVASRISQD).

This sequence belongs to the dCTP deaminase family. In terms of assembly, homotrimer.

It carries out the reaction dCTP + H2O + H(+) = dUTP + NH4(+). It participates in pyrimidine metabolism; dUMP biosynthesis; dUMP from dCTP (dUTP route): step 1/2. Catalyzes the deamination of dCTP to dUTP. This chain is dCTP deaminase, found in Shewanella oneidensis (strain ATCC 700550 / JCM 31522 / CIP 106686 / LMG 19005 / NCIMB 14063 / MR-1).